The sequence spans 601 residues: Putative Lon protease homolog (601 aa).

The region spanning 363–560 (GEIVGQINGL…YQACELLFGR (198 aa)) is the Lon proteolytic domain. Residues Ser455 and Lys498 contribute to the active site.

Belongs to the peptidase S16 family.

This chain is Putative Lon protease homolog, found in Haemophilus influenzae (strain ATCC 51907 / DSM 11121 / KW20 / Rd).